The chain runs to 236 residues: 2-C-methyl-D-erythritol 4-phosphate cytidylyltransferase (236 aa).

The protein belongs to the IspD/TarI cytidylyltransferase family. IspD subfamily. As to quaternary structure, homodimer.

The catalysed reaction is 2-C-methyl-D-erythritol 4-phosphate + CTP + H(+) = 4-CDP-2-C-methyl-D-erythritol + diphosphate. Its pathway is isoprenoid biosynthesis; isopentenyl diphosphate biosynthesis via DXP pathway; isopentenyl diphosphate from 1-deoxy-D-xylulose 5-phosphate: step 2/6. In terms of biological role, catalyzes the formation of 4-diphosphocytidyl-2-C-methyl-D-erythritol from CTP and 2-C-methyl-D-erythritol 4-phosphate (MEP). This Salmonella typhimurium (strain LT2 / SGSC1412 / ATCC 700720) protein is 2-C-methyl-D-erythritol 4-phosphate cytidylyltransferase.